Consider the following 253-residue polypeptide: Blue-light photoreceptor (253 aa).

A PAS domain is found at 6–79 (QFDVILKALN…AKIRHAINEK (74 aa)). Cys56 is subject to S-4a-FMN cysteine. The 54-residue stretch at 80 to 133 (STANVLLKNYRKDGTSFMNELTIEPIYDDHEHLYFVGIQKDVTTEHDYQLELEK) folds into the PAC domain. The STAS domain occupies 142–253 (STPIVPIKEN…STIKEALQFY (112 aa)).

Post-translationally, FMN binds covalently to cysteine after exposure to blue light and this bond is spontaneously broken in the dark.

Exhibits the same spectroscopical features and blue-light induced photochemistry as plants phototropins, with the reversible formation of a blue-shifted photoproduct, assigned to an FMN-cysteine thiol adduct. Positive regulator in the activation of the general stress transcription factor sigma-B. The chain is Blue-light photoreceptor from Listeria monocytogenes serovar 1/2a (strain ATCC BAA-679 / EGD-e).